Reading from the N-terminus, the 311-residue chain is 1,4-dihydroxy-2-naphthoate octaprenyltransferase (311 aa).

Transmembrane regions (helical) follow at residues 31–51 (LTAS…YVKV), 53–73 (LLLF…TNLF), 104–126 (TILQ…ICAS), 131–153 (LALI…LPIA), 157–177 (FGEL…SFFI), 182–202 (INMQ…AINL), 220–240 (LAIL…FAVA), 242–262 (IWVV…VVFL), and 290–310 (TAQT…ISYF).

This sequence belongs to the MenA family. Type 1 subfamily.

The protein resides in the cell membrane. The enzyme catalyses an all-trans-polyprenyl diphosphate + 1,4-dihydroxy-2-naphthoate + H(+) = a 2-demethylmenaquinol + CO2 + diphosphate. It participates in quinol/quinone metabolism; menaquinone biosynthesis; menaquinol from 1,4-dihydroxy-2-naphthoate: step 1/2. In terms of biological role, conversion of 1,4-dihydroxy-2-naphthoate (DHNA) to demethylmenaquinone (DMK). The chain is 1,4-dihydroxy-2-naphthoate octaprenyltransferase from Bacillus subtilis (strain 168).